A 292-amino-acid chain; its full sequence is Glycine--tRNA ligase alpha subunit (292 aa).

Belongs to the class-II aminoacyl-tRNA synthetase family. As to quaternary structure, tetramer of two alpha and two beta subunits.

The protein resides in the cytoplasm. It carries out the reaction tRNA(Gly) + glycine + ATP = glycyl-tRNA(Gly) + AMP + diphosphate. The polypeptide is Glycine--tRNA ligase alpha subunit (Synechococcus elongatus (strain ATCC 33912 / PCC 7942 / FACHB-805) (Anacystis nidulans R2)).